Consider the following 297-residue polypeptide: Glycerol-3-phosphate dehydrogenase [NAD(P)+] (297 aa).

NADPH-binding residues include tryptophan 11, arginine 30, and lysine 79. Lysine 79, glycine 107, and serine 109 together coordinate sn-glycerol 3-phosphate. NADPH is bound at residue alanine 111. The sn-glycerol 3-phosphate site is built by lysine 161, aspartate 214, serine 224, arginine 225, and asparagine 226. Lysine 161 acts as the Proton acceptor in catalysis. Arginine 225 is a binding site for NADPH. Residues valine 249 and glutamate 251 each contribute to the NADPH site.

The protein belongs to the NAD-dependent glycerol-3-phosphate dehydrogenase family.

The protein localises to the cytoplasm. The catalysed reaction is sn-glycerol 3-phosphate + NAD(+) = dihydroxyacetone phosphate + NADH + H(+). It catalyses the reaction sn-glycerol 3-phosphate + NADP(+) = dihydroxyacetone phosphate + NADPH + H(+). The protein operates within membrane lipid metabolism; glycerophospholipid metabolism. Functionally, catalyzes the reduction of the glycolytic intermediate dihydroxyacetone phosphate (DHAP) to sn-glycerol 3-phosphate (G3P), the key precursor for phospholipid synthesis. The chain is Glycerol-3-phosphate dehydrogenase [NAD(P)+] from Wolinella succinogenes (strain ATCC 29543 / DSM 1740 / CCUG 13145 / JCM 31913 / LMG 7466 / NCTC 11488 / FDC 602W) (Vibrio succinogenes).